We begin with the raw amino-acid sequence, 357 residues long: Neuronal-specific septin-3 (357 aa).

Basic and acidic residues predominate over residues 1 to 10 (MSKGLPETRT). Residues 1 to 29 (MSKGLPETRTDAAMSELVPEPRPKPAVPM) form a disordered region. Residues 58-330 (TGFDFNIMVV…ETYRAKRLND (273 aa)) form the Septin-type G domain. The interval 68–75 (GQSGLGKS) is G1 motif. 68–75 (GQSGLGKS) provides a ligand contact to GTP. Phosphoserine is present on Ser-91. Thr-102 provides a ligand contact to GTP. The segment at 125 to 128 (DTPG) is G3 motif. The interval 207 to 210 (AKAD) is G4 motif. Residues 208-216 (KADTMTLEE), Gly-264, and Arg-279 each bind GTP.

This sequence belongs to the TRAFAC class TrmE-Era-EngA-EngB-Septin-like GTPase superfamily. Septin GTPase family. Septins polymerize into heterooligomeric protein complexes that form filaments, and can associate with cellular membranes, actin filaments and microtubules. GTPase activity is required for filament formation. Post-translationally, phosphorylated by PKG on serine residues. Phosphorylated by PKG on Ser-91.

It localises to the cytoplasm. The protein resides in the cytoskeleton. The protein localises to the synapse. In terms of biological role, filament-forming cytoskeletal GTPase. May play a role in cytokinesis (Potential). This chain is Neuronal-specific septin-3, found in Bos taurus (Bovine).